Here is a 208-residue protein sequence, read N- to C-terminus: Large ribosomal subunit protein uL3 (208 aa).

It belongs to the universal ribosomal protein uL3 family. In terms of assembly, part of the 50S ribosomal subunit. Forms a cluster with proteins L14 and L19.

Functionally, one of the primary rRNA binding proteins, it binds directly near the 3'-end of the 23S rRNA, where it nucleates assembly of the 50S subunit. The chain is Large ribosomal subunit protein uL3 from Desulfosudis oleivorans (strain DSM 6200 / JCM 39069 / Hxd3) (Desulfococcus oleovorans).